The chain runs to 398 residues: Metallophosphoesterase 1 (398 aa).

Residues 25 to 45 (VCFVSSVLIFCEFFIYYLVIF) traverse the membrane as a helical segment. Positions 75, 117, 155, 251, 305, and 307 each coordinate a divalent metal cation. A helical membrane pass occupies residues 359–379 (VFAIYWAAGALLVVLVLAHFQ). Positions 394-398 (KHKAA) match the Di-lysine motif motif.

Belongs to the metallophosphoesterase superfamily. MPPE1 family. The cofactor is Mn(2+).

The protein resides in the endoplasmic reticulum-Golgi intermediate compartment membrane. Functionally, metallophosphoesterase that catalyzes the removal of a side-chain ethanolamine-phosphate (EtNP) from the second mannose of the GPI-anchor protein intermediate. Participates in the glycan remodeling steps of GPI-anchor maturation to allow an efficient transport of GPI-anchor proteins from the endoplasmic reticulum to the Golgi. The protein is Metallophosphoesterase 1 of Gallus gallus (Chicken).